Consider the following 185-residue polypeptide: Threonylcarbamoyl-AMP synthase (185 aa).

The 182-residue stretch at 4-185 (SWRVQQAARE…LATGEIVRPG (182 aa)) folds into the YrdC-like domain.

It belongs to the SUA5 family. TsaC subfamily.

It is found in the cytoplasm. The catalysed reaction is L-threonine + hydrogencarbonate + ATP = L-threonylcarbamoyladenylate + diphosphate + H2O. Its function is as follows. Required for the formation of a threonylcarbamoyl group on adenosine at position 37 (t(6)A37) in tRNAs that read codons beginning with adenine. Catalyzes the conversion of L-threonine, HCO(3)(-)/CO(2) and ATP to give threonylcarbamoyl-AMP (TC-AMP) as the acyladenylate intermediate, with the release of diphosphate. This Pseudomonas putida (strain W619) protein is Threonylcarbamoyl-AMP synthase.